The following is a 105-amino-acid chain: Iron-sulfur cluster assembly protein CyaY (105 aa).

The protein belongs to the frataxin family.

In terms of biological role, involved in iron-sulfur (Fe-S) cluster assembly. May act as a regulator of Fe-S biogenesis. The chain is Iron-sulfur cluster assembly protein CyaY from Chromobacterium violaceum (strain ATCC 12472 / DSM 30191 / JCM 1249 / CCUG 213 / NBRC 12614 / NCIMB 9131 / NCTC 9757 / MK).